A 273-amino-acid polypeptide reads, in one-letter code: Putative pyruvate, phosphate dikinase regulatory protein (273 aa).

153-160 (GISRTSKT) contacts ADP.

This sequence belongs to the pyruvate, phosphate/water dikinase regulatory protein family. PDRP subfamily.

The enzyme catalyses N(tele)-phospho-L-histidyl/L-threonyl-[pyruvate, phosphate dikinase] + ADP = N(tele)-phospho-L-histidyl/O-phospho-L-threonyl-[pyruvate, phosphate dikinase] + AMP + H(+). The catalysed reaction is N(tele)-phospho-L-histidyl/O-phospho-L-threonyl-[pyruvate, phosphate dikinase] + phosphate + H(+) = N(tele)-phospho-L-histidyl/L-threonyl-[pyruvate, phosphate dikinase] + diphosphate. In terms of biological role, bifunctional serine/threonine kinase and phosphorylase involved in the regulation of the pyruvate, phosphate dikinase (PPDK) by catalyzing its phosphorylation/dephosphorylation. This is Putative pyruvate, phosphate dikinase regulatory protein from Agrobacterium fabrum (strain C58 / ATCC 33970) (Agrobacterium tumefaciens (strain C58)).